A 386-amino-acid polypeptide reads, in one-letter code: MKGIFPIDKFRTLQTPFYYYDTKVLRDTLSAINQEVAKYPSYSVHYAVKANANPKVLTIIRESGMGADCVSGGEIRAAVRAGFPANKIVFAGVGKADWEINLGLEYGIFCFNVESIPELEVINELAAAQNKIANVAFRINPDVGAHTHANITTGLAENKFGISMQDMDRVIDVALEMKNVKFIGLHFHIGSQILDMGDFIALCNRVNELQDKLEARRILVEHINVGGGLGIDYGHPNRQSVPDFKSYFATYAGQLKLRPYQTLHFELGRAVVGQCGSLISKVLYVKQGTKKKFAILDAGMTDLIRPALYQAYHKMENITSEEPVEAYDVVGPICESSDVFGKAIDLNKVKRGDLIALRSAGAYGEIMASGYNCRELPKGYTSDELV.

Residue K49 is modified to N6-(pyridoxal phosphate)lysine. Pyridoxal 5'-phosphate-binding positions include G228 and 266–269 (ELGR). Substrate is bound by residues R269, R305, Y309, E335, and Y363. Y363 serves as a coordination point for pyridoxal 5'-phosphate.

It belongs to the Orn/Lys/Arg decarboxylase class-II family. LysA subfamily. In terms of assembly, homodimer. Requires pyridoxal 5'-phosphate as cofactor.

It carries out the reaction meso-2,6-diaminopimelate + H(+) = L-lysine + CO2. Its pathway is amino-acid biosynthesis; L-lysine biosynthesis via DAP pathway; L-lysine from DL-2,6-diaminopimelate: step 1/1. Its function is as follows. Specifically catalyzes the decarboxylation of meso-diaminopimelate (meso-DAP) to L-lysine. The polypeptide is Diaminopimelate decarboxylase (Bacteroides thetaiotaomicron (strain ATCC 29148 / DSM 2079 / JCM 5827 / CCUG 10774 / NCTC 10582 / VPI-5482 / E50)).